The primary structure comprises 556 residues: Butanoate--CoA ligase AAE1 (556 aa).

The Microbody targeting signal signature appears at 554–556; it reads SKL.

This sequence belongs to the ATP-dependent AMP-binding enzyme family. Expressed in roots, leaves, stems, flowers and developing seeds.

The protein resides in the peroxisome. The enzyme catalyses butanoate + ATP + CoA = butanoyl-CoA + AMP + diphosphate. The catalysed reaction is hexanoate + ATP + CoA = hexanoyl-CoA + AMP + diphosphate. It carries out the reaction pentanoate + ATP + CoA = pentanoyl-CoA + AMP + diphosphate. It catalyses the reaction 4-methylpentanoate + ATP + CoA = 4-methylpentanoyl-CoA + AMP + diphosphate. Catalyzes the ligation of CoA on butanoate to produce butanoyl-CoA. Can also use hexanoate, pentanoate and 4-methylpentanoate as substrates with a lower efficiency. This chain is Butanoate--CoA ligase AAE1, found in Arabidopsis thaliana (Mouse-ear cress).